A 287-amino-acid chain; its full sequence is Phosphoribosylaminoimidazole-succinocarboxamide synthase (287 aa).

This sequence belongs to the SAICAR synthetase family.

The catalysed reaction is 5-amino-1-(5-phospho-D-ribosyl)imidazole-4-carboxylate + L-aspartate + ATP = (2S)-2-[5-amino-1-(5-phospho-beta-D-ribosyl)imidazole-4-carboxamido]succinate + ADP + phosphate + 2 H(+). Its pathway is purine metabolism; IMP biosynthesis via de novo pathway; 5-amino-1-(5-phospho-D-ribosyl)imidazole-4-carboxamide from 5-amino-1-(5-phospho-D-ribosyl)imidazole-4-carboxylate: step 1/2. This Neisseria meningitidis serogroup B (strain ATCC BAA-335 / MC58) protein is Phosphoribosylaminoimidazole-succinocarboxamide synthase.